A 592-amino-acid chain; its full sequence is PiggyBac transposable element-derived protein 2 (592 aa).

The tract at residues 31 to 69 is disordered; that stretch reads EEEESNNNREEIFIAPPDNAAGEFTDEDSGDEDSQRGAH.

This is PiggyBac transposable element-derived protein 2 (PGBD2) from Homo sapiens (Human).